The following is a 311-amino-acid chain: Coelenterazine h 2-monooxygenase (311 aa).

Positions 45–291 (NAVIFLHGNA…KGLHFSQEDA (247 aa)) constitute an AB hydrolase-1 domain. Substrate is bound by residues D162 and H285.

In terms of assembly, monomer.

It catalyses the reaction coelenterazine h + O2 = excited coelenteramide h monoanion + hnu + CO2 + H(+). In terms of biological role, upon binding the substrate, the enzyme catalyzes an oxygenation, producing a very short-lived hydroperoxide that cyclizes into a dioxetanone structure, which collapses, releasing a CO(2) molecule. The spontaneous breakdown of the dioxetanone releases the energy (about 50 kcal/mole) that is necessary to generate the excited state of the coelenteramide product, which is the singlet form of the monoanion. In vivo the product undergoes the process of nonradiative energy transfer to an accessory protein, a green fluorescent protein (GFP), which results in green bioluminescence. In vitro, in the absence of GFP, the product emits blue light. In Renilla reniformis (Sea pansy), this protein is Coelenterazine h 2-monooxygenase.